The primary structure comprises 341 residues: Glucokinase (341 aa).

Position 18–23 (18–23 (GDIGGT)) interacts with ATP.

This sequence belongs to the bacterial glucokinase family.

Its subcellular location is the cytoplasm. The catalysed reaction is D-glucose + ATP = D-glucose 6-phosphate + ADP + H(+). This chain is Glucokinase, found in Rhizobium etli (strain CIAT 652).